Here is a 311-residue protein sequence, read N- to C-terminus: GPN-loop GTPase 2 (311 aa).

20–25 (GSGKTT) contacts GTP. A Gly-Pro-Asn (GPN)-loop; involved in dimer interface motif is present at residues 77 to 79 (GPN). 179 to 182 (SKMD) serves as a coordination point for GTP.

Belongs to the GPN-loop GTPase family. In terms of assembly, heterodimers with gpn1 or gpn3. Binds to RNA polymerase II (RNAPII).

Small GTPase required for proper localization of RNA polymerase II and III (RNAPII and RNAPIII). May act at an RNAP assembly step prior to nuclear import. The chain is GPN-loop GTPase 2 from Danio rerio (Zebrafish).